The primary structure comprises 177 residues: Large ribosomal subunit protein uL6 (177 aa).

Belongs to the universal ribosomal protein uL6 family. In terms of assembly, part of the 50S ribosomal subunit.

This protein binds to the 23S rRNA, and is important in its secondary structure. It is located near the subunit interface in the base of the L7/L12 stalk, and near the tRNA binding site of the peptidyltransferase center. The chain is Large ribosomal subunit protein uL6 from Erythrobacter litoralis (strain HTCC2594).